Here is a 372-residue protein sequence, read N- to C-terminus: Gustatory and pheromone receptor 39a, isoform B (372 aa).

Residues 1 to 32 (MGTRNRKLLFFLHYQRYLGLTNLDFSKSLHIY) lie on the Cytoplasmic side of the membrane. Residues 33-53 (WLHGTWSSTAIQIVVVGVFMA) form a helical membrane-spanning segment. Residues 54-59 (ALLGAL) are Extracellular-facing. A helical transmembrane segment spans residues 60–80 (AESLYYMETKSQTGNTFDNAV). Topologically, residues 81–122 (ILTTSVTQLLANLWLRSQQKSQVNLLQRLSQVVELLQFEPYA) are cytoplasmic. The helical transmembrane segment at 123 to 143 (VPQFRWLYRIWLLVCLIYGAM) threads the bilayer. Topologically, residues 144–147 (VTHF) are extracellular. Residues 148–168 (GINWLTTMQISRVLTLIGFVY) form a helical membrane-spanning segment. Residues 169 to 224 (RCVLANFQFTCYTGMVVILKKLLQVQVKQLEHLVSTTTISMAGVAGCLRTHDEILL) are Cytoplasmic-facing. The helical transmembrane segment at 225 to 245 (LGQRELIAVYGGVILFLFIYQ) threads the bilayer. The Extracellular segment spans residues 246-265 (VMQCILIFYISNLEGFHSSN). Residues 266 to 286 (DLVLIFCWLAPMLFYLILPLV) form a helical membrane-spanning segment. At 287–348 (VNDIHNQANK…KSTLFKLFTA (62 aa)) the chain is on the cytoplasmic side. A helical transmembrane segment spans residues 349–368 (IFTYMVILVQFKEMENSTKS). I369 is a topological domain (extracellular).

This sequence belongs to the insect chemoreceptor superfamily. Gustatory receptor (GR) family. Gr21a subfamily. In terms of tissue distribution, expressed in the adult labellar chemosensory neurons. In larvae, is expressed in neurons of the terminal external chemosensory organ, as well as in the dorsal and posterior pharyngeal sense organs.

It localises to the cell membrane. Gustatory receptor which mediates acceptance or avoidance behavior, depending on its substrates. Plays a role in sustaining courtship behavior in males, possibly through the reception of a stimulating arrestant pheromone. This chain is Gustatory and pheromone receptor 39a, isoform B (Gr39a), found in Drosophila melanogaster (Fruit fly).